Consider the following 366-residue polypeptide: MASSVTPLGSWVLLHHHPSTILTQSRSRSPPSLITLKPISLTPKRTVSSSSSSSLITKEDNNLKSSSSSFDFMSYIIRKADSVNKALDSAVPLREPLKIHEAMRYSLLAGGKRVRPVLCIAACELVGGEESLAMPARCAVEMIHTMSLIHDDLPCMDNDDLRRGKPTNHKVYGEDVAVLAGDALLSFAFEHLASATSSEVSPARVVRAVGELAKAIGTEGLVAGQVVDISSEGLDLNNVGLEHLKFIHLHKTAALLEASAVLGGIIGGGSDEEIERLRKFARCIGLLFQVVDDILDVTKSSQELGKTAGKDLIADKLTYPKLMGLEKSREFAEKLNTEARDQLLGFDSDKVAPLLALANYIANRQN.

The tract at residues lysine 44 to serine 65 is disordered. Isopentenyl diphosphate is bound by residues lysine 112, arginine 115, and histidine 144. Aspartate 151 and aspartate 157 together coordinate Mg(2+). Arginine 162 serves as a coordination point for dimethylallyl diphosphate. Arginine 163 contacts isopentenyl diphosphate. 5 residues coordinate dimethylallyl diphosphate: lysine 251, threonine 252, glutamine 289, lysine 306, and lysine 316.

It belongs to the FPP/GGPP synthase family. In terms of assembly, dimer. Mg(2+) is required as a cofactor.

It localises to the plastid. Its subcellular location is the chloroplast stroma. The protein resides in the chromoplast. The catalysed reaction is isopentenyl diphosphate + dimethylallyl diphosphate = (2E)-geranyl diphosphate + diphosphate. It carries out the reaction isopentenyl diphosphate + (2E)-geranyl diphosphate = (2E,6E)-farnesyl diphosphate + diphosphate. It catalyses the reaction isopentenyl diphosphate + (2E,6E)-farnesyl diphosphate = (2E,6E,10E)-geranylgeranyl diphosphate + diphosphate. The protein operates within isoprenoid biosynthesis; farnesyl diphosphate biosynthesis; farnesyl diphosphate from geranyl diphosphate and isopentenyl diphosphate: step 1/1. It participates in isoprenoid biosynthesis; geranyl diphosphate biosynthesis; geranyl diphosphate from dimethylallyl diphosphate and isopentenyl diphosphate: step 1/1. It functions in the pathway isoprenoid biosynthesis; geranylgeranyl diphosphate biosynthesis; geranylgeranyl diphosphate from farnesyl diphosphate and isopentenyl diphosphate: step 1/1. Its function is as follows. Catalyzes the trans-addition of the three molecules of IPP onto DMAPP to form geranylgeranyl pyrophosphate. In Sinapis alba (White mustard), this protein is Geranylgeranyl pyrophosphate synthase, chloroplastic/chromoplastic (GGPS1).